The chain runs to 287 residues: Putative sugar uptake protein LJ_0170 (287 aa).

10 consecutive transmembrane segments (helical) span residues 4–23, 28–50, 56–78, 91–108, 118–137, 150–169, 179–198, 211–230, 240–259, and 266–285; these read VYLF…IASV, VYNQ…MAIM, WSLF…GQYI, ISTG…VLAF, LYGF…TSFT, VSTI…SSSI, SIFF…YTLV, VQSG…YILS, FVIS…IFLH, and GLIF…MLTT.

This sequence belongs to the GRP transporter (TC 2.A.7.5) family.

The protein resides in the cell membrane. The sequence is that of Putative sugar uptake protein LJ_0170 from Lactobacillus johnsonii (strain CNCM I-12250 / La1 / NCC 533).